The primary structure comprises 136 residues: Small ribosomal subunit protein uS9 (136 aa).

Belongs to the universal ribosomal protein uS9 family.

This Borrelia recurrentis (strain A1) protein is Small ribosomal subunit protein uS9.